The following is a 382-amino-acid chain: D-alanine--D-alanine ligase (382 aa).

Positions 161-372 (KVVFEAAGLQ…YAELIDELIY (212 aa)) constitute an ATP-grasp domain. Residue 193–248 (VDRLGYPVFVKPARAGSSMGISKVDSLEGLDAAIAAAREHDLKLVIEAGIVGREIE) participates in ATP binding. Mg(2+)-binding residues include aspartate 326, glutamate 339, and asparagine 341.

The protein belongs to the D-alanine--D-alanine ligase family. Requires Mg(2+) as cofactor. Mn(2+) is required as a cofactor.

The protein localises to the cytoplasm. The catalysed reaction is 2 D-alanine + ATP = D-alanyl-D-alanine + ADP + phosphate + H(+). It functions in the pathway cell wall biogenesis; peptidoglycan biosynthesis. Its function is as follows. Cell wall formation. This Arthrobacter sp. (strain FB24) protein is D-alanine--D-alanine ligase.